A 450-amino-acid polypeptide reads, in one-letter code: Protein phosphatase 1F (450 aa).

The PPM-type phosphatase domain maps to 152–409; that stretch reads LVSIHAIRNT…DNITVMVVFL (258 aa). Residues Asp194, Gly195, Asp356, and Asp400 each coordinate Mn(2+). Positions 420 to 450 are disordered; the sequence is GQGAGGAQADVGSQDLSTGLSELEINTSQRS. The segment covering 433-450 has biased composition (polar residues); sequence QDLSTGLSELEINTSQRS. Phosphoserine is present on Ser450.

Belongs to the PP2C family. Associates with FEM1B. It depends on Mg(2+) as a cofactor. Mn(2+) is required as a cofactor.

The catalysed reaction is O-phospho-L-seryl-[protein] + H2O = L-seryl-[protein] + phosphate. It carries out the reaction O-phospho-L-threonyl-[protein] + H2O = L-threonyl-[protein] + phosphate. Functionally, dephosphorylates and concomitantly deactivates CaM-kinase II activated upon autophosphorylation, and CaM-kinases IV and I activated upon phosphorylation by CaM-kinase kinase. Promotes apoptosis. The protein is Protein phosphatase 1F (Ppm1f) of Rattus norvegicus (Rat).